The primary structure comprises 754 residues: Probable beta-glucosidase D (754 aa).

Positions 1 to 20 (MKVLSFIVAAALLGLTGASS) are cleaved as a signal peptide. 3 N-linked (GlcNAc...) asparagine glycosylation sites follow: N66, N69, and N186. Positions 186–206 (NRTGGGGGGGGDSGSAPYSSN) are disordered. The segment covering 188-198 (TGGGGGGGGDS) has biased composition (gly residues). N239 carries an N-linked (GlcNAc...) asparagine glycan. Residue D267 is part of the active site. 9 N-linked (GlcNAc...) asparagine glycosylation sites follow: N301, N345, N443, N512, N534, N573, N588, N655, and N745.

Belongs to the glycosyl hydrolase 3 family.

The protein localises to the secreted. It carries out the reaction Hydrolysis of terminal, non-reducing beta-D-glucosyl residues with release of beta-D-glucose.. It functions in the pathway glycan metabolism; cellulose degradation. In terms of biological role, beta-glucosidases are one of a number of cellulolytic enzymes involved in the degradation of cellulosic biomass. Catalyzes the last step releasing glucose from the inhibitory cellobiose. This is Probable beta-glucosidase D (bglD) from Aspergillus niger (strain ATCC MYA-4892 / CBS 513.88 / FGSC A1513).